We begin with the raw amino-acid sequence, 88 residues long: Phosphocarrier protein HPr (88 aa).

Positions 1–88 constitute an HPr domain; the sequence is MEKREFNIIA…DTMKKEGLAE (88 aa). Residue H15 is the Pros-phosphohistidine intermediate of the active site. S46 carries the phosphoserine; by HPrK/P modification.

Belongs to the HPr family.

Its subcellular location is the cytoplasm. Its activity is regulated as follows. Phosphorylation on Ser-46 inhibits the phosphoryl transfer from enzyme I to HPr. General (non sugar-specific) component of the phosphoenolpyruvate-dependent sugar phosphotransferase system (sugar PTS). This major carbohydrate active-transport system catalyzes the phosphorylation of incoming sugar substrates concomitantly with their translocation across the cell membrane. The phosphoryl group from phosphoenolpyruvate (PEP) is transferred to the phosphoryl carrier protein HPr by enzyme I. Phospho-HPr then transfers it to the PTS EIIA domain. In terms of biological role, P-Ser-HPr interacts with the catabolite control protein A (CcpA), forming a complex that binds to DNA at the catabolite response elements cre, operator sites preceding a large number of catabolite-regulated genes. Thus, P-Ser-HPr is a corepressor in carbon catabolite repression (CCR), a mechanism that allows bacteria to coordinate and optimize the utilization of available carbon sources. P-Ser-HPr also plays a role in inducer exclusion, in which it probably interacts with several non-PTS permeases and inhibits their transport activity. This chain is Phosphocarrier protein HPr (ptsH), found in Lacticaseibacillus casei (Lactobacillus casei).